We begin with the raw amino-acid sequence, 127 residues long: 3-aminoacrylate deaminase RutC (127 aa).

This sequence belongs to the RutC family.

It carries out the reaction (Z)-3-aminoacrylate + H2O + H(+) = 3-oxopropanoate + NH4(+). Involved in pyrimidine catabolism. Catalyzes the deamination of 3-aminoacrylate to malonic semialdehyde, a reaction that can also occur spontaneously. RutC may facilitate the reaction and modulate the metabolic fitness, rather than catalyzing essential functions. This is 3-aminoacrylate deaminase RutC from Pseudomonas syringae pv. syringae (strain B728a).